Consider the following 211-residue polypeptide: Thymidylate kinase (211 aa).

10-17 (GGDGVGKS) contacts ATP.

Belongs to the thymidylate kinase family.

The enzyme catalyses dTMP + ATP = dTDP + ADP. Functionally, phosphorylation of dTMP to form dTDP in both de novo and salvage pathways of dTTP synthesis. This is Thymidylate kinase from Clavibacter sepedonicus (Clavibacter michiganensis subsp. sepedonicus).